Consider the following 499-residue polypeptide: Putative antiporter subunit mnhD2 (499 aa).

The next 14 helical transmembrane spans lie at 1–21 (MSNL…ILVF), 31–51 (ILSI…LIYV), 77–97 (LSLL…AYGF), 107–127 (FHLP…FLTS), 129–149 (LFNL…LVTL), 160–180 (IVYV…IGML), 208–228 (ISLV…FMWL), 239–259 (LAAL…IRFF), 272–292 (TLLV…VIAY), 307–327 (IGFI…GAIF), 329–349 (LAND…LVYM), 367–387 (FFGV…PFSG), 402–422 (GNYI…YSLF), and 449–469 (GLLS…PVVL).

The protein belongs to the CPA3 antiporters (TC 2.A.63) subunit D family. May form a heterooligomeric complex that consists of seven subunits: mnhA2, mnhB2, mnhC2, mnhD2, mnhE2, mnhF2 and mnhG2.

It localises to the cell membrane. The protein is Putative antiporter subunit mnhD2 (mnhD2) of Staphylococcus epidermidis (strain ATCC 35984 / DSM 28319 / BCRC 17069 / CCUG 31568 / BM 3577 / RP62A).